The chain runs to 385 residues: Acetate kinase (385 aa).

Asn9 serves as a coordination point for Mg(2+). ATP is bound at residue Lys16. Arg75 lines the substrate pocket. Asp132 functions as the Proton donor/acceptor in the catalytic mechanism. ATP is bound by residues 192–196 (HLGNG), 266–268 (DFR), and 314–318 (GIGEN). Glu368 contributes to the Mg(2+) binding site.

The protein belongs to the acetokinase family. As to quaternary structure, homodimer. Mg(2+) is required as a cofactor. The cofactor is Mn(2+).

The protein localises to the cytoplasm. The catalysed reaction is acetate + ATP = acetyl phosphate + ADP. Its pathway is metabolic intermediate biosynthesis; acetyl-CoA biosynthesis; acetyl-CoA from acetate: step 1/2. In terms of biological role, catalyzes the formation of acetyl phosphate from acetate and ATP. Can also catalyze the reverse reaction. This is Acetate kinase from Mycobacterium bovis (strain ATCC BAA-935 / AF2122/97).